The chain runs to 757 residues: Large ribosomal subunit protein mL102 (rPPR5) (757 aa).

A compositionally biased stretch (polar residues) spans 39-55 (EETQTPANANPETQSPD). The interval 39 to 82 (EETQTPANANPETQSPDAKSETKKNLTSTETRPLRERFQRGKRQ) is disordered. The segment covering 70–82 (RPLRERFQRGKRQ) has biased composition (basic and acidic residues). 16 PPR repeats span residues 149–183 (DRDTHMKMIKMLGEVSKLNHARCILLDMPEKGVPW), 184–218 (DEDMFVVLIESYGKAGIVQESVKIFQKMKDLGVER), 219–253 (TIKSYNSLFKVILRRGRYMMAKRYFNKMVSEGVEP), 254–288 (TRHTYNLMLWGFFLSLRLETALRFFEDMKTRGISP), 289–323 (DDATFNTMINGFCRFKKMDEAEKLFVEMKGNKIGP), 324–358 (SVVSYTTMIKGYLAVDRVDDGLRIFEEMRSSGIEP), 359–393 (NATTYSTLLPGLCDAGKMVEAKNILKNMMAKHIAP), 395–429 (DNSIFLKLLVSQSKAGDMAAATEVLKAMATLNVPA), 430–464 (EAGHYGVLIENQCKASAYNRAIKLLDTLIEKEIIL), 473–507 (EPSAYNPIIEYLCNNGQTAKAEVLFRQLMKRGVQD), 510–541 (ALNNLIRGHAKEGNPDSSYEILKIMSRRGVPR), 542–576 (ESNAYELLIKSYMSKGEPGDAKTALDSMVEDGHVP), 577–611 (DSSLFRSVIESLFEDGRVQTASRVMMIMIDKNVGI), 614–648 (NMDLIAKILEALLMRGHVEEALGRIDLLNQNGHTA), 651–680 (DSLLSVLSEKGKTIAALKLLDFGLERDLSL), and 681–715 (EFSSYDKVLDALLGAGKTLNAYSVLCKIMEKGSST).

Belongs to the PPR family. P subfamily. Component of the mitochondrial ribosome large subunit.

The protein localises to the mitochondrion. This Arabidopsis thaliana (Mouse-ear cress) protein is Large ribosomal subunit protein mL102 (rPPR5).